The primary structure comprises 125 residues: Translation initiation factor 5A (125 aa).

Lysine 35 is modified (hypusine).

Belongs to the eIF-5A family.

It localises to the cytoplasm. In terms of biological role, functions by promoting the formation of the first peptide bond. The polypeptide is Translation initiation factor 5A (eIF5A) (Methanoregula boonei (strain DSM 21154 / JCM 14090 / 6A8)).